We begin with the raw amino-acid sequence, 446 residues long: UPF0597 protein DvMF_1488 (446 aa).

This sequence belongs to the UPF0597 family.

This Nitratidesulfovibrio vulgaris (strain DSM 19637 / Miyazaki F) (Desulfovibrio vulgaris) protein is UPF0597 protein DvMF_1488.